The chain runs to 74 residues: Ubiquitin-like protein FUBI (74 aa).

It belongs to the ubiquitin family.

This Bos taurus (Bovine) protein is Ubiquitin-like protein FUBI (FAU).